Reading from the N-terminus, the 173-residue chain is RNA pyrophosphohydrolase (173 aa).

Residues 6–149 (GFRANVGIIL…KRGVYRRALQ (144 aa)) form the Nudix hydrolase domain. The Nudix box signature appears at 38–59 (GGIDRGETPMDAMYRELWEEVG).

The protein belongs to the Nudix hydrolase family. RppH subfamily. A divalent metal cation serves as cofactor.

Accelerates the degradation of transcripts by removing pyrophosphate from the 5'-end of triphosphorylated RNA, leading to a more labile monophosphorylated state that can stimulate subsequent ribonuclease cleavage. The protein is RNA pyrophosphohydrolase of Psychrobacter arcticus (strain DSM 17307 / VKM B-2377 / 273-4).